Here is a 131-residue protein sequence, read N- to C-terminus: Profilin-1 (131 aa).

It belongs to the profilin family. Occurs in many kinds of cells as a complex with monomeric actin in a 1:1 ratio.

It localises to the cytoplasm. It is found in the cytoskeleton. Functionally, binds to actin and affects the structure of the cytoskeleton. At high concentrations, profilin prevents the polymerization of actin, whereas it enhances it at low concentrations. By binding to PIP2, it inhibits the formation of IP3 and DG. The sequence is that of Profilin-1 (PRO1) from Triticum aestivum (Wheat).